We begin with the raw amino-acid sequence, 236 residues long: Eukaryotic translation initiation factor 3 subunit J (236 aa).

Residues 20 to 88 (ANNINKWEGE…AEEEKRLANL (69 aa)) form a disordered region. Over residues 28 to 46 (GEDDDEDVKESWEDEEEKK) the composition is skewed to acidic residues. Basic and acidic residues-rich tracts occupy residues 47–58 (DEEKPTKTEVPV) and 68–88 (AKLE…LANL).

It belongs to the eIF-3 subunit J family. In terms of assembly, component of the eukaryotic translation initiation factor 3 (eIF-3) complex. The eIF-3 complex interacts with pix.

Its subcellular location is the cytoplasm. Component of the eukaryotic translation initiation factor 3 (eIF-3) complex, which is involved in protein synthesis of a specialized repertoire of mRNAs and, together with other initiation factors, stimulates binding of mRNA and methionyl-tRNAi to the 40S ribosome. The eIF-3 complex specifically targets and initiates translation of a subset of mRNAs involved in cell proliferation. The sequence is that of Eukaryotic translation initiation factor 3 subunit J from Drosophila willistoni (Fruit fly).